Reading from the N-terminus, the 381-residue chain is Creatine kinase M-type (381 aa).

Residues 11 to 98 (KLNYKSEEEY…FDPIIQDRHG (88 aa)) form the Phosphagen kinase N-terminal domain. Positions 125–367 (YVLSSRVRTG…KLMVEMEKKL (243 aa)) constitute a Phosphagen kinase C-terminal domain. 128-132 (SSRVR) contributes to the ATP binding site. A Phosphoserine modification is found at Ser164. Position 166 is a phosphothreonine (Thr166). The residue at position 178 (Ser178) is a Phosphoserine. Residue Thr180 is modified to Phosphothreonine. His191 lines the ATP pocket. Phosphoserine is present on Ser199. Positions 236 and 292 each coordinate ATP. 2 positions are modified to phosphothreonine: Thr313 and Thr322. ATP is bound at residue 320 to 325 (RGTGGV). Ser372 bears the Phosphoserine mark.

It belongs to the ATP:guanido phosphotransferase family. As to quaternary structure, dimer of identical or non-identical chains, which can be either B (brain type) or M (muscle type). With MM being the major form in skeletal muscle and myocardium, MB existing in myocardium, and BB existing in many tissues, especially brain.

It catalyses the reaction creatine + ATP = N-phosphocreatine + ADP + H(+). In terms of biological role, reversibly catalyzes the transfer of phosphate between ATP and various phosphogens (e.g. creatine phosphate). Creatine kinase isoenzymes play a central role in energy transduction in tissues with large, fluctuating energy demands, such as skeletal muscle, heart, brain and spermatozoa. The sequence is that of Creatine kinase M-type (CKM) from Oryctolagus cuniculus (Rabbit).